Consider the following 635-residue polypeptide: Leucine-rich repeat and fibronectin type-III domain-containing protein 4 (635 aa).

A signal peptide spans 1 to 16 (MAPPLLLLLLASGAAA). Residues 17–48 (CPLPCVCQNLSESLSTLCAHRGLLFVPPNVDR) form the LRRNT domain. Residues 17 to 518 (CPLPCVCQNL…LQAHVLGGTL (502 aa)) lie on the Extracellular side of the membrane. N-linked (GlcNAc...) asparagine glycosylation is found at asparagine 25 and asparagine 70. 7 LRR repeats span residues 49-70 (RTVE…DFRN), 73-94 (GLVD…AFGD), 97-118 (SLRS…SLRG), 121-142 (NLQH…AFDD), 146-161 (SLED…RQVP), 170-191 (ALHT…AFAQ), and 194-215 (QLSR…PLFS). The LRRCT domain occupies 234–280 (NPLHCNCELLWLRRLARPDDLETCASPPGLAGRYFWAVPEGEFSCEP). Residues 281–367 (PLIARHTQRL…GEATARVELR (87 aa)) enclose the Ig-like domain. The cysteines at positions 302 and 351 are disulfide-linked. N-linked (GlcNAc...) asparagine glycosylation is found at asparagine 324, asparagine 333, asparagine 376, and asparagine 440. A disordered region spans residues 373–410 (HGGNSSAEGGRPGPSDIAASARTAAEGEGTLESEPAVQ). Positions 405 to 502 (SEPAVQVTEV…GCAHFSTLPA (98 aa)) constitute a Fibronectin type-III domain. A helical transmembrane segment spans residues 519 to 539 (TVAVGGVLVAALLVFTVALLV). At 540-635 (RGRGAGNGRL…SAERLEESVV (96 aa)) the chain is on the cytoplasmic side. Residues 555-583 (HVQSQTNGGPSPTPKAHPPRSPPPRPQRS) form a disordered region. A compositionally biased stretch (pro residues) spans 565–580 (SPTPKAHPPRSPPPRP). Serine 585 and serine 626 each carry phosphoserine. Positions 632-635 (ESVV) match the PDZ-binding motif.

It belongs to the LRFN family. As to quaternary structure, can form heteromeric complexes with LRFN1, LRFN2, LRFN3 and LRFN5. Unable to form homophilic interactions across cell junctions. Interacts with DLG1, DLG2, DLG3 and DLG4. In terms of processing, glycosylated.

The protein localises to the membrane. Functionally, promotes neurite outgrowth in hippocampal neurons. May play a role in redistributing DLG4 to the cell periphery. The protein is Leucine-rich repeat and fibronectin type-III domain-containing protein 4 (LRFN4) of Homo sapiens (Human).